The primary structure comprises 432 residues: Histidine--tRNA ligase (432 aa).

This sequence belongs to the class-II aminoacyl-tRNA synthetase family.

Its subcellular location is the cytoplasm. It catalyses the reaction tRNA(His) + L-histidine + ATP = L-histidyl-tRNA(His) + AMP + diphosphate + H(+). The chain is Histidine--tRNA ligase from Halobacterium salinarum (strain ATCC 29341 / DSM 671 / R1).